Here is a 224-residue protein sequence, read N- to C-terminus: ATP-dependent dethiobiotin synthetase BioD (224 aa).

Residue Thr18 coordinates Mg(2+). Residue Lys39 is part of the active site. Ser43 contacts substrate. Residues Asp56 and Glu117 each coordinate Mg(2+). Residues Asp56, 117 to 120 (EGVG), and 177 to 178 (NE) contribute to the ATP site.

This sequence belongs to the dethiobiotin synthetase family. Homodimer. Mg(2+) is required as a cofactor.

The protein resides in the cytoplasm. The catalysed reaction is (7R,8S)-7,8-diammoniononanoate + CO2 + ATP = (4R,5S)-dethiobiotin + ADP + phosphate + 3 H(+). The protein operates within cofactor biosynthesis; biotin biosynthesis; biotin from 7,8-diaminononanoate: step 1/2. Its function is as follows. Catalyzes a mechanistically unusual reaction, the ATP-dependent insertion of CO2 between the N7 and N8 nitrogen atoms of 7,8-diaminopelargonic acid (DAPA, also called 7,8-diammoniononanoate) to form a ureido ring. This chain is ATP-dependent dethiobiotin synthetase BioD, found in Xanthomonas axonopodis pv. citri (strain 306).